Here is a 194-residue protein sequence, read N- to C-terminus: Peptidyl-tRNA hydrolase (194 aa).

A tRNA-binding site is contributed by Tyr17. His22 functions as the Proton acceptor in the catalytic mechanism. TRNA-binding residues include Phe68, Asn70, and Asn116.

The protein belongs to the PTH family. In terms of assembly, monomer.

It localises to the cytoplasm. The enzyme catalyses an N-acyl-L-alpha-aminoacyl-tRNA + H2O = an N-acyl-L-amino acid + a tRNA + H(+). Hydrolyzes ribosome-free peptidyl-tRNAs (with 1 or more amino acids incorporated), which drop off the ribosome during protein synthesis, or as a result of ribosome stalling. Its function is as follows. Catalyzes the release of premature peptidyl moieties from peptidyl-tRNA molecules trapped in stalled 50S ribosomal subunits, and thus maintains levels of free tRNAs and 50S ribosomes. In Pasteurella multocida (strain Pm70), this protein is Peptidyl-tRNA hydrolase.